The following is a 146-amino-acid chain: HTH-type transcriptional regulator FarR (146 aa).

One can recognise an HTH marR-type domain in the interval His7–Lys139. Positions Phe53 to Lys76 form a DNA-binding region, H-T-H motif.

Its activity is regulated as follows. Repressor activity requires the presence of the Integration Host Factor (IHF), which binds to sequences located between FarR binding sites A and C. IHF binding to the promoter region stabilizes the binding of FarR to its binding sites A and C and as a consequence, enhances repression of the farAB operon. In terms of biological role, negatively controls expression of the farAB operon by binding directly to the farAB promoter region. Binds to three sites (sites A, B and C) within the DNA sequence upstream of farA. Also represses its own expression. In Neisseria gonorrhoeae, this protein is HTH-type transcriptional regulator FarR.